Here is a 181-residue protein sequence, read N- to C-terminus: ATP synthase subunit b 2 (181 aa).

Low complexity predominate over residues 1 to 18 (MATTTHDAGHGAAEAAHG). The interval 1 to 20 (MATTTHDAGHGAAEAAHGSS) is disordered. The chain crosses the membrane as a helical span at residues 34–54 (IFWLLVTLVVIYLILSRIALP).

Belongs to the ATPase B chain family. As to quaternary structure, F-type ATPases have 2 components, F(1) - the catalytic core - and F(0) - the membrane proton channel. F(1) has five subunits: alpha(3), beta(3), gamma(1), delta(1), epsilon(1). F(0) has three main subunits: a(1), b(2) and c(10-14). The alpha and beta chains form an alternating ring which encloses part of the gamma chain. F(1) is attached to F(0) by a central stalk formed by the gamma and epsilon chains, while a peripheral stalk is formed by the delta and b chains.

The protein resides in the cell inner membrane. Its function is as follows. F(1)F(0) ATP synthase produces ATP from ADP in the presence of a proton or sodium gradient. F-type ATPases consist of two structural domains, F(1) containing the extramembraneous catalytic core and F(0) containing the membrane proton channel, linked together by a central stalk and a peripheral stalk. During catalysis, ATP synthesis in the catalytic domain of F(1) is coupled via a rotary mechanism of the central stalk subunits to proton translocation. Component of the F(0) channel, it forms part of the peripheral stalk, linking F(1) to F(0). The b'-subunit is a diverged and duplicated form of b found in plants and photosynthetic bacteria. The protein is ATP synthase subunit b 2 (atpF2) of Ruegeria sp. (strain TM1040) (Silicibacter sp.).